The sequence spans 403 residues: Argininosuccinate synthase (403 aa).

Residues 13–21 (AYSGGLDTS) and alanine 40 contribute to the ATP site. L-citrulline is bound by residues tyrosine 92 and serine 97. Glycine 122 is a binding site for ATP. Residues threonine 124, asparagine 128, and aspartate 129 each contribute to the L-aspartate site. Asparagine 128 is a binding site for L-citrulline. Residues arginine 132, serine 181, serine 190, glutamate 266, and tyrosine 278 each contribute to the L-citrulline site.

The protein belongs to the argininosuccinate synthase family. Type 1 subfamily. As to quaternary structure, homotetramer.

The protein resides in the cytoplasm. The enzyme catalyses L-citrulline + L-aspartate + ATP = 2-(N(omega)-L-arginino)succinate + AMP + diphosphate + H(+). It functions in the pathway amino-acid biosynthesis; L-arginine biosynthesis; L-arginine from L-ornithine and carbamoyl phosphate: step 2/3. The polypeptide is Argininosuccinate synthase (Aliivibrio fischeri (strain MJ11) (Vibrio fischeri)).